A 5255-amino-acid chain; its full sequence is Bacitracin synthase 1 (5255 aa).

The interval 39–612 is domain 1 (isoleucine-activating); it reads LHELFEEQAM…IKELSAFIEA (574 aa). Over residues 519–531 the composition is skewed to basic and acidic residues; that stretch reads VDRKALPEPDRTA. A disordered region spans residues 519–542; that stretch reads VDRKALPEPDRTAGAENEYEAPRN. One can recognise a Carrier 1 domain in the interval 539-614; it reads APRNETEEKL…ELSAFIEANH (76 aa). S574 bears the O-(pantetheine 4'-phosphoryl)serine mark. The tract at residues 621 to 1037 is cyclization; that stretch reads TLVTRAADPE…ITWDYVEQIF (417 aa). Positions 1109–1648 are domain 2 (cysteine-activating); that stretch reads HHDEVMTYQE…FKNDTIIALD (540 aa). Carrier domains lie at 1580–1655, 2616–2691, 3659–3733, and 5166–5241; these read LPEN…KNRE, APRD…VRRR, PPRN…TEET, and APRN…LTAE. O-(pantetheine 4'-phosphoryl)serine occurs at positions 1615, 2651, 3694, and 5201. Residues 2124-2689 are domain 3 (leucine-activating); sequence GKAIHQLFEE…IKGLRDISVR (566 aa). The interval 3164 to 3732 is domain 4 (glutamine-activating); sequence DHPAVAFGDE…KDLSRFITEE (569 aa). Positions 4668 to 5249 are domain 5 (isoleucine-activating); that stretch reads LHELFEEQAM…AEAESAVSEE (582 aa).

Belongs to the ATP-dependent AMP-binding enzyme family. Large multienzyme complex of BA1, BA2 and BA3. The cofactor is pantetheine 4'-phosphate.

It catalyses the reaction L-glutamate = D-glutamate. It participates in antibiotic biosynthesis; bacitracin biosynthesis. Functionally, activates five amino acids, incorporates two D-amino acids, releases and cyclizes the mature bacitracin. The protein is Bacitracin synthase 1 (bacA) of Bacillus licheniformis.